The sequence spans 317 residues: tRNA dimethylallyltransferase (317 aa).

14-21 (GPTAVGKT) provides a ligand contact to ATP. Position 16–21 (16–21 (TAVGKT)) interacts with substrate. The interval 39-42 (DSMQ) is interaction with substrate tRNA.

The protein belongs to the IPP transferase family. In terms of assembly, monomer. Mg(2+) is required as a cofactor.

The catalysed reaction is adenosine(37) in tRNA + dimethylallyl diphosphate = N(6)-dimethylallyladenosine(37) in tRNA + diphosphate. Its function is as follows. Catalyzes the transfer of a dimethylallyl group onto the adenine at position 37 in tRNAs that read codons beginning with uridine, leading to the formation of N6-(dimethylallyl)adenosine (i(6)A). The protein is tRNA dimethylallyltransferase of Bacillus cereus (strain ATCC 14579 / DSM 31 / CCUG 7414 / JCM 2152 / NBRC 15305 / NCIMB 9373 / NCTC 2599 / NRRL B-3711).